Reading from the N-terminus, the 509-residue chain is Probable aspartic-type endopeptidase CTSD (509 aa).

The N-terminal stretch at 1 to 21 (MQFLWLCLLSAVTLQFTGTLA) is a signal peptide. One can recognise a Peptidase A1 domain in the interval 102–408 (YFSEVKVGSE…DFDKNRVGLA (307 aa)). The active site involves aspartate 120. A glycan (N-linked (GlcNAc...) asparagine) is linked at asparagine 174. The active site involves aspartate 302. Asparagine 361 carries an N-linked (GlcNAc...) asparagine glycan. A disordered region spans residues 451 to 489 (NKAPSGGSPGLPAESGSDSTTNGEATNGATSSPNSSSSV). Residues 466–480 (GSDSTTNGEATNGAT) are compositionally biased toward polar residues. N-linked (GlcNAc...) asparagine glycosylation occurs at asparagine 484. Residue serine 485 is the site of GPI-anchor amidated serine attachment. The propeptide at 486 to 509 (SSSVLTPTWLTLAVFFAIGSSLWS) is removed in mature form.

The protein belongs to the peptidase A1 family.

The protein resides in the cell membrane. Its function is as follows. Probable GPI-anchored aspartic-type endopeptidase which contributes to virulence. This Arthroderma benhamiae (strain ATCC MYA-4681 / CBS 112371) (Trichophyton mentagrophytes) protein is Probable aspartic-type endopeptidase CTSD (CTSD).